The chain runs to 97 residues: MSESLSWMQTGDTLALSGELDQDVLLPLWEMREEAVKGITCIDLSRVSRVDTGGLALLLHLIDLAKKQGNNVTLQGVNDKVYTLAKLYNLPADVLPR.

The region spanning 1-97 is the STAS domain; the sequence is MSESLSWMQT…YNLPADVLPR (97 aa).

As to quaternary structure, the complex is composed of two ATP-binding proteins (MlaF), two transmembrane proteins (MlaE), two cytoplasmic solute-binding proteins (MlaB) and six periplasmic solute-binding proteins (MlaD).

It localises to the cytoplasm. In terms of biological role, part of the ABC transporter complex MlaFEDB, which is involved in a phospholipid transport pathway that maintains lipid asymmetry in the outer membrane by retrograde trafficking of phospholipids from the outer membrane to the inner membrane. MlaB plays critical roles in both the assembly and activity of the complex. May act by modulating MlaF structure and stability. The polypeptide is Intermembrane phospholipid transport system binding protein MlaB (Escherichia coli (strain K12)).